The following is a 918-amino-acid chain: Sarcosine dehydrogenase, mitochondrial (918 aa).

Residues 1–13 (MASLSRALRVAAA) show a composition bias toward low complexity. A mitochondrion-targeting transit peptide spans 1–22 (MASLSRALRVAAAHPRQSPTRG). Residues 1-40 (MASLSRALRVAAAHPRQSPTRGMGPCNLSSAAGPTAEKSV) are disordered. Lys-38 carries the N6-succinyllysine modification. At His-108 the chain carries Tele-8alpha-FAD histidine. N6-acetyllysine; alternate is present on Lys-173. Lys-173 is subject to N6-succinyllysine; alternate. 2 positions are modified to N6-succinyllysine: Lys-377 and Lys-391. N6-acetyllysine is present on residues Lys-559 and Lys-775. Tyr-777 is modified (phosphotyrosine). 3 positions are modified to N6-acetyllysine; alternate: Lys-802, Lys-884, and Lys-904. An N6-succinyllysine; alternate mark is found at Lys-802, Lys-884, and Lys-904.

Belongs to the GcvT family. FAD is required as a cofactor. In terms of tissue distribution, expressed in pancreas, liver and kidney.

It localises to the mitochondrion matrix. The enzyme catalyses (6S)-5,6,7,8-tetrahydrofolyl-(gamma-L-Glu)(n) + sarcosine + oxidized [electron-transfer flavoprotein] + H(+) = (6R)-5,10-methylenetetrahydrofolyl-(gamma-L-Glu)(n) + reduced [electron-transfer flavoprotein] + glycine. It functions in the pathway amine and polyamine degradation; sarcosine degradation; formaldehyde and glycine from sarcosine: step 1/1. Its function is as follows. Catalyzes the last step of the oxidative degradation of choline to glycine. Converts sarcosine into glycine. The sequence is that of Sarcosine dehydrogenase, mitochondrial from Homo sapiens (Human).